A 669-amino-acid polypeptide reads, in one-letter code: Epithelial sodium channel subunit gamma (669 aa).

Residues 1-67 (MAPPYHGDTR…VVSRGRLRKF (67 aa)) are Cytoplasmic-facing. The chain crosses the membrane as a helical span at residues 68–88 (IWILLTLSAVGLILWQCAELI). Topologically, residues 89-551 (MSYYTASVSV…VILLSNFGGQ (463 aa)) are extracellular. 8 disulfides stabilise this stretch: Cys-113-Cys-300, Cys-223-Cys-231, Cys-277-Cys-284, Cys-389-Cys-474, Cys-411-Cys-470, Cys-415-Cys-466, Cys-424-Cys-451, and Cys-426-Cys-440. Residues 552 to 572 (LGLWMSCSMVCVIEIIEVFFI) traverse the membrane as a helical segment. The Cytoplasmic segment spans residues 573–669 (DSFSIVMRRR…LPDTLEGRSH (97 aa)). The tract at residues 592–619 (DRKAPRPQEPPQVNAPAKEGHDNPVCTD) is disordered.

It belongs to the amiloride-sensitive sodium channel (TC 1.A.6) family. SCNN1G subfamily. As to quaternary structure, component of the heterotrimeric epithelial sodium channel (ENaC) composed of an alpha/SCNN1A, a beta/SCNN1B and a gamma/SCNN1G subunit.

The protein localises to the apical cell membrane. It catalyses the reaction Na(+)(in) = Na(+)(out). Originally identified and characterized by its inhibition by the diuretic drug amiloride. Functionally, this is one of the three pore-forming subunits of the heterotrimeric epithelial sodium channel (ENaC), a critical regulator of sodium balance and fluid homeostasis. ENaC operates in epithelial tissues, where it mediates the electrodiffusion of sodium ions from extracellular fluid through the apical membrane of cells, with water following osmotically. This Pelodiscus sinensis (Chinese softshell turtle) protein is Epithelial sodium channel subunit gamma.